A 304-amino-acid chain; its full sequence is Acetaldehyde dehydrogenase 1 (304 aa).

Residue 11–14 participates in NAD(+) binding; sequence SGNI. Catalysis depends on C130, which acts as the Acyl-thioester intermediate. NAD(+)-binding positions include 161-169 and N272; that span reads SVGPGTRAN.

It belongs to the acetaldehyde dehydrogenase family.

It carries out the reaction acetaldehyde + NAD(+) + CoA = acetyl-CoA + NADH + H(+). The polypeptide is Acetaldehyde dehydrogenase 1 (lapF) (Azoarcus sp. (strain BH72)).